The following is a 390-amino-acid chain: MKFVDEAAILVVAGDGGNGCVSFRREKYIPNGGPDGGDGGDGGDVYLLADENLNTLIDYRFEKSFRAERGQNGQSRDCTGKRGKDITIKVPVGTRVQDQGTGEILGDMTRHEQRLMVAKGGWHGLGNTRFKSSVNRAPRQKTLGTAGEARDILLELLLLADVGMLGLPNAGKSTFIRAVSAAKPKVADYPFTTLVPSLGVVRMDHEQSFVVADIPGLIEGASDGAGLGIRFLKHLERCRVLLHLVDIAPIDESDPVENAKVIINELNQYSENLSQKPRWLVFNKIDVIGEEEAAERAKAIAEGMGWEGKYYMISAVNREGVNALCWDVMKFINTQPKAMAIEESAPEKVEFMWDDYHREQIAEVEAEADDDWDDDWDEEDDEGVEIIYQK.

The Obg domain occupies 1 to 159 (MKFVDEAAIL…RDILLELLLL (159 aa)). Positions 160-333 (ADVGMLGLPN…LCWDVMKFIN (174 aa)) constitute an OBG-type G domain. Residues 166 to 173 (GLPNAGKS), 191 to 195 (FTTLV), 213 to 216 (DIPG), 283 to 286 (NKID), and 314 to 316 (SAV) contribute to the GTP site. 2 residues coordinate Mg(2+): serine 173 and threonine 193. Positions 366 to 384 (AEADDDWDDDWDEEDDEGV) are enriched in acidic residues. The segment at 366-390 (AEADDDWDDDWDEEDDEGVEIIYQK) is disordered.

Belongs to the TRAFAC class OBG-HflX-like GTPase superfamily. OBG GTPase family. In terms of assembly, monomer. Mg(2+) serves as cofactor.

Its subcellular location is the cytoplasm. Its function is as follows. An essential GTPase which binds GTP, GDP and possibly (p)ppGpp with moderate affinity, with high nucleotide exchange rates and a fairly low GTP hydrolysis rate. Plays a role in control of the cell cycle, stress response, ribosome biogenesis and in those bacteria that undergo differentiation, in morphogenesis control. This is GTPase Obg from Serratia proteamaculans (strain 568).